The following is a 122-amino-acid chain: MIQPQTYVNVADNSGARKLMCIRVLDASFKQSANIGDTIIAVVKEAIPNMPLKKSDIVRAVIVRSAKGIRRPDGTIIRFDDNAAVVINKEGNPRGTRVFGPVARELREREFTKIVSLAPEVL.

The protein belongs to the universal ribosomal protein uL14 family. In terms of assembly, part of the 50S ribosomal subunit.

Its subcellular location is the plastid. It is found in the chloroplast. Binds to 23S rRNA. This chain is Large ribosomal subunit protein uL14c, found in Oltmannsiellopsis viridis (Marine flagellate).